The sequence spans 37 residues: Large ribosomal subunit protein bL36 (37 aa).

It belongs to the bacterial ribosomal protein bL36 family.

The sequence is that of Large ribosomal subunit protein bL36 from Treponema pallidum (strain Nichols).